We begin with the raw amino-acid sequence, 227 residues long: MAFLILLRHGKSVWNEKNLFTGWVDIPLSQKGIDEAMLAGEAIKDLPIDCIFTSSLVRSLMTALLAMTHHNSKKIPYIVHDDPEQKHMSKIYSDEVNHMIPLYRSSALNERMYGELQGKNKKKTAEQFGEEQVKLWRRSYKTAPPNGESLYDTGQRTIPYFQETIFPLLQNSKNVFVSAHGNSLRSLIMDIEKLSEEEVHSLELPTGKPIVYLWTGHTFERHPELFG.

Residues 8 to 15 (RHGKSVWN), 21 to 22 (TG), Arg58, 110 to 113 (ERMY), Lys121, 137 to 138 (RR), and 181 to 182 (GN) contribute to the substrate site. His9 acts as the Tele-phosphohistidine intermediate in catalysis. Residue Glu110 is the Proton donor/acceptor of the active site.

This sequence belongs to the phosphoglycerate mutase family. BPG-dependent PGAM subfamily.

It carries out the reaction (2R)-2-phosphoglycerate = (2R)-3-phosphoglycerate. It participates in carbohydrate degradation; glycolysis; pyruvate from D-glyceraldehyde 3-phosphate: step 3/5. In terms of biological role, catalyzes the interconversion of 2-phosphoglycerate and 3-phosphoglycerate. In Chlamydia abortus (strain DSM 27085 / S26/3) (Chlamydophila abortus), this protein is 2,3-bisphosphoglycerate-dependent phosphoglycerate mutase.